Consider the following 760-residue polypeptide: Endoplasmin homolog (760 aa).

The first 23 residues, 1 to 23 (MRFLLVGFVALLAVSAFIPNVYA), serve as a signal peptide directing secretion. Residues asparagine 95, aspartate 137, asparagine 150, and phenylalanine 187 each coordinate ATP. Asparagine 95 carries N-linked (GlcNAc...) asparagine glycosylation. Asparagine 423 carries an N-linked (GlcNAc...) asparagine glycan. Residues 727 to 760 (SQDAQVETEQHIEEAEPEPEAAEETTIEEEHSEL) are disordered. Over residues 741 to 760 (AEPEPEAAEETTIEEEHSEL) the composition is skewed to acidic residues. Positions 757 to 760 (HSEL) match the Prevents secretion from ER motif.

The protein belongs to the heat shock protein 90 family.

Its subcellular location is the endoplasmic reticulum lumen. In terms of biological role, molecular chaperone that functions in the processing and transport of secreted proteins. This chain is Endoplasmin homolog, found in Caenorhabditis elegans.